Here is a 184-residue protein sequence, read N- to C-terminus: Adenine phosphoribosyltransferase 2 (184 aa).

This sequence belongs to the purine/pyrimidine phosphoribosyltransferase family. As to quaternary structure, homodimer.

It localises to the cytoplasm. It carries out the reaction AMP + diphosphate = 5-phospho-alpha-D-ribose 1-diphosphate + adenine. It participates in purine metabolism; AMP biosynthesis via salvage pathway; AMP from adenine: step 1/1. In terms of biological role, catalyzes a salvage reaction resulting in the formation of AMP, that is energically less costly than de novo synthesis. The chain is Adenine phosphoribosyltransferase 2 from Rhizobium etli (strain ATCC 51251 / DSM 11541 / JCM 21823 / NBRC 15573 / CFN 42).